Consider the following 258-residue polypeptide: C1q-related factor (258 aa).

A signal peptide spans 1 to 16; the sequence is MLLVLVVLIPVLVSSG. Residues 39 to 117 form a disordered region; the sequence is GPGAGARTDG…PGLPGAGGSG (79 aa). Positions 67–77 are enriched in low complexity; that stretch reads GPQGKPGRTGK. The Collagen-like domain maps to 67–115; that stretch reads GPQGKPGRTGKPGPPGPPGDPGPPGPVGPPGEKGEPGKPGPPGLPGAGG. Pro residues predominate over residues 78–95; it reads PGPPGPPGDPGPPGPVGP. The region spanning 125–258 is the C1q domain; sequence TTVPRVAFYA…TFSGFIIYSD (134 aa).

As to quaternary structure, interacts with ADGRB3. Forms heterooligomers with C1QL4, when proteins are coexpressed; this interaction does not occur after secretion. Expressed in brainstem.

It localises to the secreted. Functionally, may regulate the number of excitatory synapses that are formed on hippocampus neurons. Has no effect on inhibitory synapses. The chain is C1q-related factor (C1QL1) from Homo sapiens (Human).